The following is a 984-amino-acid chain: Glutamate [NMDA] receptor subunit 1 (984 aa).

The first 24 residues, 1-24 (MAAAFAYRWLLCAAGIVNVLPIGA), serve as a signal peptide directing secretion. The Extracellular portion of the chain corresponds to 25–570 (QRHTASDNPS…TLVSFLQPFS (546 aa)). N-linked (GlcNAc...) asparagine glycans are attached at residues N255, N311, N342, N394, N451, N478, and N498. Glycine is bound by residues 527–529 (PLT) and R534. Residues 571–591 (NTLWILVMVSVHVVALVLYLL) traverse the membrane as a helical segment. Residues 592-648 (DRFSPFGRFKLSHSDSNEEKALNLSSAVWFAWGVLLNSGIGEGTPRSFSARVLGMVW) lie on the Cytoplasmic side of the membrane. A helical transmembrane segment spans residues 649–669 (AGFAMIIVASYTANLAAFLVL). At 670–828 (ERPKTKLSGI…KTPNTLGLKN (159 aa)) the chain is on the extracellular side. A glycan (N-linked (GlcNAc...) asparagine) is linked at N690. Residues S700 and D744 each coordinate glycine. Residues 829-849 (MAGVFILVGVGIAGGVGLIII) traverse the membrane as a helical segment. Over 850-984 (EVIYKKHQVK…YTSDVSHLVV (135 aa)) the chain is Cytoplasmic. The disordered stretch occupies residues 947–984 (KSGLVPPALGLGKTRPQQNPLPPRYSPGYTSDVSHLVV). Over residues 974–984 (GYTSDVSHLVV) the composition is skewed to polar residues.

The protein belongs to the glutamate-gated ion channel (TC 1.A.10.1) family. Forms a heteromeric NMDA channel with Nmdar2.

The protein localises to the cell membrane. It localises to the postsynaptic cell membrane. The protein resides in the postsynaptic density. Functionally, NMDA receptor subtype of glutamate-gated ion channels with high calcium permeability and voltage-dependent sensitivity to magnesium. Mediated by glycine. This protein plays a key role in synaptic plasticity, synaptogenesis, excitotoxicity, memory acquisition and learning. It mediates neuronal functions in glutamate neurotransmission. Is involved in the cell surface targeting of NMDA receptors. Plays a role in associative learning and in long-term memory consolidation. This is Glutamate [NMDA] receptor subunit 1 from Drosophila virilis (Fruit fly).